A 123-amino-acid chain; its full sequence is Fluoride-specific ion channel FluC (123 aa).

Transmembrane regions (helical) follow at residues 1-21, 32-52, 66-86, and 94-114; these read MQWLAIGLGAAFGACLRGWLA, LGTLGANVLGGLLIGLALVWF, FVITGFLGGLTTFSTFSAEVF, and LLAALGLVGLHVGMTLLATAL. Na(+) contacts are provided by Gly-73 and Thr-76.

Belongs to the fluoride channel Fluc/FEX (TC 1.A.43) family.

The protein localises to the cell inner membrane. It carries out the reaction fluoride(in) = fluoride(out). Its activity is regulated as follows. Na(+) is not transported, but it plays an essential structural role and its presence is essential for fluoride channel function. Its function is as follows. Fluoride-specific ion channel. Important for reducing fluoride concentration in the cell, thus reducing its toxicity. The polypeptide is Fluoride-specific ion channel FluC (Psychrobacter arcticus (strain DSM 17307 / VKM B-2377 / 273-4)).